We begin with the raw amino-acid sequence, 116 residues long: MAGRSGDSDTELLKAVKCIKILYQSNPYPKPEGTRQARRNRRRRWRARQRQIRALSDRILSSCLGRSEEPVPLQLPPLERLHINCSEDCGQGPEEGVGSSQISGESHAVLESGTKE.

Residues S5 and S8 each carry the phosphoserine; by host CK2 modification. Residues 18–26 (CIKILYQSN) form a homomultimerization region. Residues 27-47 (PYPKPEGTRQARRNRRRRWRA) form a disordered region. The short motif at 34–50 (TRQARRNRRRRWRARQR) is the Nuclear localization signal and RNA-binding (RRE) element. Residues 36–47 (QARRNRRRRWRA) are compositionally biased toward basic residues. The Nuclear export signal and binding to XPO1 motif lies at 73-84 (LQLPPLERLHIN). Positions 87-116 (EDCGQGPEEGVGSSQISGESHAVLESGTKE) are disordered. S99 is modified (phosphoserine; by host).

The protein belongs to the HIV-1 REV protein family. Homomultimer; when bound to the RRE. Multimeric assembly is essential for activity and may involve XPO1. Binds to human KPNB1, XPO1, TNPO1, RANBP5 and IPO7. Interacts with the viral Integrase. Interacts with human KHDRBS1. Interacts with human NAP1; this interaction decreases Rev multimerization and stimulates its activity. Interacts with human DEAD-box helicases DDX3 and DDX24; these interactions may serve for viral RNA export to the cytoplasm and packaging, respectively. Interacts with human PSIP1; this interaction may inhibit HIV-1 DNA integration by promoting dissociation of the Integrase-LEDGF/p75 complex. Post-translationally, asymmetrically arginine dimethylated at one site by host PRMT6. Methylation impairs the RNA-binding activity and export of viral RNA from the nucleus to the cytoplasm. In terms of processing, phosphorylated by protein kinase CK2. Presence of, and maybe binding to the N-terminus of the regulatory beta subunit of CK2 is necessary for CK2-mediated Rev's phosphorylation.

The protein localises to the host nucleus. Its subcellular location is the host nucleolus. The protein resides in the host cytoplasm. In terms of biological role, escorts unspliced or incompletely spliced viral pre-mRNAs (late transcripts) out of the nucleus of infected cells. These pre-mRNAs carry a recognition sequence called Rev responsive element (RRE) located in the env gene, that is not present in fully spliced viral mRNAs (early transcripts). This function is essential since most viral proteins are translated from unspliced or partially spliced pre-mRNAs which cannot exit the nucleus by the pathway used by fully processed cellular mRNAs. Rev itself is translated from a fully spliced mRNA that readily exits the nucleus. Rev's nuclear localization signal (NLS) binds directly to KPNB1/Importin beta-1 without previous binding to KPNA1/Importin alpha-1. KPNB1 binds to the GDP bound form of RAN (Ran-GDP) and targets Rev to the nucleus. In the nucleus, the conversion from Ran-GDP to Ran-GTP dissociates Rev from KPNB1 and allows Rev's binding to the RRE in viral pre-mRNAs. Rev multimerization on the RRE via cooperative assembly exposes its nuclear export signal (NES) to the surface. Rev can then form a complex with XPO1/CRM1 and Ran-GTP, leading to nuclear export of the complex. Conversion from Ran-GTP to Ran-GDP mediates dissociation of the Rev/RRE/XPO1/RAN complex, so that Rev can return to the nucleus for a subsequent round of export. Beside KPNB1, also seems to interact with TNPO1/Transportin-1, RANBP5/IPO5 and IPO7/RANBP7 for nuclear import. The nucleoporin-like HRB/RIP is an essential cofactor that probably indirectly interacts with Rev to release HIV RNAs from the perinuclear region to the cytoplasm. This is Protein Rev from Human immunodeficiency virus type 1 group M subtype F1 (isolate VI850) (HIV-1).